We begin with the raw amino-acid sequence, 180 residues long: Large ribosomal subunit protein uL10 (180 aa).

Belongs to the universal ribosomal protein uL10 family. Part of the ribosomal stalk of the 50S ribosomal subunit. The N-terminus interacts with L11 and the large rRNA to form the base of the stalk. The C-terminus forms an elongated spine to which L12 dimers bind in a sequential fashion forming a multimeric L10(L12)X complex.

In terms of biological role, forms part of the ribosomal stalk, playing a central role in the interaction of the ribosome with GTP-bound translation factors. The polypeptide is Large ribosomal subunit protein uL10 (rplJ) (Treponema pallidum (strain Nichols)).